The sequence spans 509 residues: ATP synthase subunit beta, mitochondrial (509 aa).

The transit peptide at 1–32 (MVLPRLIPRLSRSAFKVAQANNRVFNAPFRGM) directs the protein to the mitochondrion. An ATP-binding site is contributed by 189–196 (GAGVGKTV).

As to quaternary structure, F-type ATP synthases have 2 components, the catalytic core F(1) and the membrane-embedded component F(0), linked together by a central stalk and a peripheral stalk. The central stalk, also called rotor shaft, is often seen as part of F(1). The peripheral stalk is seen as part of F(0). F(0) contains the membrane channel next to the rotor. F-type ATP synthases form dimers but each monomer functions independently in ATP generation. The dimer consists of 17 different polypeptides: ATP1 (subunit alpha, 3 molecules per monomer, part of F(1)), ATP2 (subunit beta, 3 copies per monomer, part of F(1)), ATP3 (subunit gamma, part of the central stalk), ATP4 (subunit b, part of the peripheral stalk), ATP5/OSCP (subunit 5/OSCP, part of the peripheral stalk), ATP6 (subunit a, part of the peripheral stalk), ATP7 (subunit d, part of the peripheral stalk), ATP8 (subunit 8, part of the peripheral stalk), OLI1 (subunit c, part of the rotor, 10 molecules per monomer), ATP14 (subunit h, part of the peripheral stalk), ATP15 (subunit epsilon, part of the central stalk), ATP16 (subunit delta, part of the central stalk), ATP17 (subunit f, part of the peripheral stalk), ATP18 (subunit i/j, part of the peripheral stalk), ATP19 (subunit k, dimer-specific, at interface between monomers), ATP20 (subunit g, at interface between monomers), TIM11 (subunit e, at interface between monomers).

It localises to the mitochondrion inner membrane. The catalysed reaction is ATP + H2O + 4 H(+)(in) = ADP + phosphate + 5 H(+)(out). Its function is as follows. Mitochondrial membrane ATP synthase (F(1)F(0) ATP synthase or Complex V) produces ATP from ADP in the presence of a proton gradient across the membrane which is generated by electron transport complexes of the respiratory chain. F-type ATP synthases consist of two structural domains, F(1) - containing the extramembraneous catalytic core, and F(0) - containing the membrane proton channel, linked together by a central stalk and a peripheral stalk. During catalysis, ATP synthesis in the catalytic domain of F(1) is coupled via a rotary mechanism of the central stalk subunits to proton translocation. Subunits alpha/ATP1 and beta/ATP2 form the catalytic core in F(1). Rotation of the central stalk against the surrounding alpha/ATP1(3)beta/ATP2(3) subunits leads to hydrolysis of ATP in three separate catalytic sites on the beta/ATP2 subunits. The polypeptide is ATP synthase subunit beta, mitochondrial (Yarrowia lipolytica (strain CLIB 122 / E 150) (Yeast)).